The primary structure comprises 306 residues: UDP-3-O-acyl-N-acetylglucosamine deacetylase (306 aa).

Positions 79, 239, and 243 each coordinate Zn(2+). His-266 acts as the Proton donor in catalysis.

The protein belongs to the LpxC family. The cofactor is Zn(2+).

It carries out the reaction a UDP-3-O-[(3R)-3-hydroxyacyl]-N-acetyl-alpha-D-glucosamine + H2O = a UDP-3-O-[(3R)-3-hydroxyacyl]-alpha-D-glucosamine + acetate. It participates in glycolipid biosynthesis; lipid IV(A) biosynthesis; lipid IV(A) from (3R)-3-hydroxytetradecanoyl-[acyl-carrier-protein] and UDP-N-acetyl-alpha-D-glucosamine: step 2/6. In terms of biological role, catalyzes the hydrolysis of UDP-3-O-myristoyl-N-acetylglucosamine to form UDP-3-O-myristoylglucosamine and acetate, the committed step in lipid A biosynthesis. This chain is UDP-3-O-acyl-N-acetylglucosamine deacetylase, found in Haemophilus ducreyi (strain 35000HP / ATCC 700724).